Reading from the N-terminus, the 431-residue chain is tRNA(Ile)-lysidine synthase (431 aa).

Residue 26 to 31 (SGGVDS) coordinates ATP.

The protein belongs to the tRNA(Ile)-lysidine synthase family.

The protein resides in the cytoplasm. The enzyme catalyses cytidine(34) in tRNA(Ile2) + L-lysine + ATP = lysidine(34) in tRNA(Ile2) + AMP + diphosphate + H(+). In terms of biological role, ligates lysine onto the cytidine present at position 34 of the AUA codon-specific tRNA(Ile) that contains the anticodon CAU, in an ATP-dependent manner. Cytidine is converted to lysidine, thus changing the amino acid specificity of the tRNA from methionine to isoleucine. The chain is tRNA(Ile)-lysidine synthase from Wolbachia pipientis wMel.